The sequence spans 246 residues: Apolipoprotein L domain-containing protein 1 (246 aa).

A run of 2 helical transmembrane segments spans residues 50-72 and 89-109; these read SLAA…IVGL and GLGV…SLIF. Residues 193–220 are a coiled coil; the sequence is LKAKIQKLSESLESCTGALDELSEQLES.

This sequence belongs to the apolipoprotein L family. As to expression, present at low levels in brain vascular cells (at protein level).

Its subcellular location is the cell membrane. It localises to the cell junction. The protein localises to the cytoplasmic vesicle. It is found in the secretory vesicle. Functionally, is a modulator of endothelial barrier permeability, required for proper organization of endothelial cell-cell junctions and cytoskeleton. It also plays a role in the modulation of secretory autophagy. May affect blood-brain barrier permeability. In Rattus norvegicus (Rat), this protein is Apolipoprotein L domain-containing protein 1 (Apold1).